Here is a 125-residue protein sequence, read N- to C-terminus: Large ribosomal subunit protein bL12 (125 aa).

Belongs to the bacterial ribosomal protein bL12 family. In terms of assembly, homodimer. Part of the ribosomal stalk of the 50S ribosomal subunit. Forms a multimeric L10(L12)X complex, where L10 forms an elongated spine to which 2 to 4 L12 dimers bind in a sequential fashion. Binds GTP-bound translation factors.

Forms part of the ribosomal stalk which helps the ribosome interact with GTP-bound translation factors. Is thus essential for accurate translation. In Syntrophomonas wolfei subsp. wolfei (strain DSM 2245B / Goettingen), this protein is Large ribosomal subunit protein bL12.